The sequence spans 1042 residues: Ubiquitin carboxyl-terminal hydrolase 38 (1042 aa).

A USP domain is found at 445-949 (TGLINLGNTC…TAYVLLYKKQ (505 aa)). Cys-454 acts as the Nucleophile in catalysis. Residue His-857 is the Proton acceptor of the active site.

The protein belongs to the peptidase C19 family. In terms of assembly, interacts with isoform 1 of FBXW7; this interaction prevents FBXW7-mediated degradation of MYC. As to expression, highly expressed in skeletal muscle. Expressed in adrenal gland.

It localises to the cytoplasm. The protein resides in the nucleus. The enzyme catalyses Thiol-dependent hydrolysis of ester, thioester, amide, peptide and isopeptide bonds formed by the C-terminal Gly of ubiquitin (a 76-residue protein attached to proteins as an intracellular targeting signal).. Its function is as follows. Deubiquitinating enzyme that plays a role in various cellular processes, including DNA repair, cell cycle regulation, and immune response. Plays a role in the inhibition of type I interferon signaling by mediating the 'Lys-33' to 'Lys-48' ubiquitination transition of TBK1 leading to its degradation. Cleaves the ubiquitin chain from the histone demethylase LSD1/KDM1A and prevents it from degradation by the 26S proteasome, thus maintaining LSD1 protein level in cells. Plays a role in the DNA damage response by regulating the deacetylase activity of HDAC1. Mechanistically, removes the 'Lys-63'-linked ubiquitin chain promoting the deacetylase activity of HDAC1 in response to DNA damage. Also acts as a specific deubiquitinase of histone deacetylase 3/HDAC3 and cleaves its 'Lys-63'-linked ubiquitin chains to lower its histone deacetylase activity. Regulates MYC levels and cell proliferation via antagonizing ubiquitin E3 ligase FBXW7 thereby preventing MYC 'Lys-48'-linked ubiquitination and degradation. Participates in antiviral response by removing both 'Lys-48'-linked and 'Lys-63'-linked polyubiquitination of Zika virus envelope protein E. Constitutively associated with IL-33R/IL1RL1, deconjugates its 'Lys-27'-linked polyubiquitination resulting in its autophagic degradation. The polypeptide is Ubiquitin carboxyl-terminal hydrolase 38 (USP38) (Homo sapiens (Human)).